A 61-amino-acid chain; its full sequence is Small ribosomal subunit protein uS14 (61 aa).

Positions 24, 27, 40, and 43 each coordinate Zn(2+).

The protein belongs to the universal ribosomal protein uS14 family. Zinc-binding uS14 subfamily. In terms of assembly, part of the 30S ribosomal subunit. Contacts proteins S3 and S10. Zn(2+) serves as cofactor.

Functionally, binds 16S rRNA, required for the assembly of 30S particles and may also be responsible for determining the conformation of the 16S rRNA at the A site. This Spiroplasma citri protein is Small ribosomal subunit protein uS14.